The following is a 383-amino-acid chain: Geranylgeranyl pyrophosphate synthase esdpD (383 aa).

Isopentenyl diphosphate-binding residues include Lys-88, Arg-91, and His-120. Positions 150 and 154 each coordinate Mg(2+). Arg-159 lines the dimethylallyl diphosphate pocket. Arg-160 contacts isopentenyl diphosphate. Positions 237, 238, and 271 each coordinate dimethylallyl diphosphate. Asp-274 serves as a coordination point for Mg(2+). Positions 278, 288, and 298 each coordinate dimethylallyl diphosphate.

It belongs to the FPP/GGPP synthase family. Mg(2+) is required as a cofactor.

It carries out the reaction isopentenyl diphosphate + dimethylallyl diphosphate = (2E)-geranyl diphosphate + diphosphate. The catalysed reaction is isopentenyl diphosphate + (2E)-geranyl diphosphate = (2E,6E)-farnesyl diphosphate + diphosphate. The enzyme catalyses isopentenyl diphosphate + (2E,6E)-farnesyl diphosphate = (2E,6E,10E)-geranylgeranyl diphosphate + diphosphate. Its pathway is secondary metabolite biosynthesis; terpenoid biosynthesis. Functionally, geranylgeranyl pyrophosphate synthase; part of the cluster that mediates the biosynthesis of shearones, diterpenoid pyrones (DPs) which are structurally diverse meroterpenoids consisting of a diterpene linked by a pyrone, and which may exhibit a range of bioactivities. Within the pathway, esdpD takes part to the biosynthesis of the molecular scaffold by providing geranylgeranyl pyrophosphate (GGPP) to the prenyltransferase esdpC for C-3 geranylgeranylation of the alpha-pyrone. The molecular scaffold is commonly biosynthesized by a series of enzymes including the non-reducing polyketide synthase (NR-PKS) esdpA that generates an alpha-pyrone; the prenyltransferase esdpC that attaches a geranylgeranyl pyrophosphate (GGPP) produced by the GGPP synthase (GGPPS) esdpD onto the pyrone unit; the FAD-dependent monooxygenase esdpE that converts an olefin on the diterpene unit into an epoxide; and the terpene cyclase esdpB that catalyzes the cyclization reactions to give the molecular backbone shearone A. In the modification steps, esdpF oxidizes the hydroxy group to a ketone at C-3 and esdpG then attaches hydroxy groups at both C-11 and C-12. After that, esdpI hydroxylates at C-20 and esdpH hydroxylates at C-6'. The ether bridge is generated by nucleophilic attack of the hydroxy group at C-20 to the carbonyl carbon at C-3. EsdpH can also functions prior to esdpI. The different combinations of these modification enzymes lead to the production of diverse shearone derivatives, shearone I being the end product of the pathway. The alpha-ketoglutarate-dependent dioxygenase esdpJ seems not to be involved in this pathway. This chain is Geranylgeranyl pyrophosphate synthase esdpD, found in Penicillium shearii (Eupenicillium shearii).